A 206-amino-acid chain; its full sequence is Uridine kinase (206 aa).

11–18 (GGSGSGKT) is an ATP binding site.

Belongs to the uridine kinase family.

The protein resides in the cytoplasm. It carries out the reaction uridine + ATP = UMP + ADP + H(+). The enzyme catalyses cytidine + ATP = CMP + ADP + H(+). It participates in pyrimidine metabolism; CTP biosynthesis via salvage pathway; CTP from cytidine: step 1/3. It functions in the pathway pyrimidine metabolism; UMP biosynthesis via salvage pathway; UMP from uridine: step 1/1. This chain is Uridine kinase, found in Macrococcus caseolyticus (strain JCSC5402) (Macrococcoides caseolyticum).